Reading from the N-terminus, the 315-residue chain is Dihydroorotate dehydrogenase (fumarate) (315 aa).

Substrate is bound by residues Lys-46, Asn-70–Leu-74, and Asn-130. Lys-46–Ser-47 serves as a coordination point for FMN. Asn-130 is an FMN binding site. Cys-133 functions as the Nucleophile in the catalytic mechanism. FMN-binding residues include Lys-167 and Ile-195. Residue Asn-196 to Ser-197 participates in substrate binding. Residues Gly-224, Gly-252 to Gly-253, and Gly-274 to Thr-275 each bind FMN.

Belongs to the dihydroorotate dehydrogenase family. Type 1 subfamily. As to quaternary structure, homodimer. Requires FMN as cofactor.

It localises to the cytoplasm. It carries out the reaction (S)-dihydroorotate + fumarate = orotate + succinate. Its pathway is pyrimidine metabolism; UMP biosynthesis via de novo pathway. Functionally, catalyzes the conversion of dihydroorotate to orotate with fumarate as the electron acceptor. The protein is Dihydroorotate dehydrogenase (fumarate) (URA1) of Kluyveromyces lactis (strain ATCC 8585 / CBS 2359 / DSM 70799 / NBRC 1267 / NRRL Y-1140 / WM37) (Yeast).